The primary structure comprises 243 residues: UPF0758 protein Tery_2667 (243 aa).

Positions 113–235 (VVESPQAAAD…HSSLRQITNL (123 aa)) constitute an MPN domain. Residues H184, H186, and D197 each contribute to the Zn(2+) site. The short motif at 184 to 197 (HNHPSGNVEPSPED) is the JAMM motif element.

Belongs to the UPF0758 family.

The protein is UPF0758 protein Tery_2667 of Trichodesmium erythraeum (strain IMS101).